Consider the following 94-residue polypeptide: Co-chaperonin GroES (94 aa).

It belongs to the GroES chaperonin family. In terms of assembly, heptamer of 7 subunits arranged in a ring. Interacts with the chaperonin GroEL.

The protein resides in the cytoplasm. Functionally, together with the chaperonin GroEL, plays an essential role in assisting protein folding. The GroEL-GroES system forms a nano-cage that allows encapsulation of the non-native substrate proteins and provides a physical environment optimized to promote and accelerate protein folding. GroES binds to the apical surface of the GroEL ring, thereby capping the opening of the GroEL channel. The polypeptide is Co-chaperonin GroES (Listeria monocytogenes serotype 4b (strain CLIP80459)).